Consider the following 135-residue polypeptide: Translation initiation factor 2 subunit beta (135 aa).

This sequence belongs to the eIF-2-beta/eIF-5 family. In terms of assembly, heterotrimer composed of an alpha, a beta and a gamma chain.

Functionally, eIF-2 functions in the early steps of protein synthesis by forming a ternary complex with GTP and initiator tRNA. The protein is Translation initiation factor 2 subunit beta (eif2b) of Methanothermobacter thermautotrophicus (strain ATCC 29096 / DSM 1053 / JCM 10044 / NBRC 100330 / Delta H) (Methanobacterium thermoautotrophicum).